Here is a 218-residue protein sequence, read N- to C-terminus: Probable transaldolase 2 (218 aa).

The Schiff-base intermediate with substrate role is filled by Lys-83.

The protein belongs to the transaldolase family. Type 3B subfamily.

It localises to the cytoplasm. It carries out the reaction D-sedoheptulose 7-phosphate + D-glyceraldehyde 3-phosphate = D-erythrose 4-phosphate + beta-D-fructose 6-phosphate. Its pathway is carbohydrate degradation; pentose phosphate pathway; D-glyceraldehyde 3-phosphate and beta-D-fructose 6-phosphate from D-ribose 5-phosphate and D-xylulose 5-phosphate (non-oxidative stage): step 2/3. Functionally, transaldolase is important for the balance of metabolites in the pentose-phosphate pathway. The chain is Probable transaldolase 2 from Listeria innocua serovar 6a (strain ATCC BAA-680 / CLIP 11262).